We begin with the raw amino-acid sequence, 181 residues long: Protein Syd (181 aa).

This sequence belongs to the Syd family.

It is found in the cell inner membrane. Its function is as follows. Interacts with the SecY protein in vivo. May bind preferentially to an uncomplexed state of SecY, thus functioning either as a chelating agent for excess SecY in the cell or as a regulatory factor that negatively controls the translocase function. In Cronobacter sakazakii (strain ATCC BAA-894) (Enterobacter sakazakii), this protein is Protein Syd.